Here is a 300-residue protein sequence, read N- to C-terminus: 4-hydroxy-tetrahydrodipicolinate synthase (300 aa).

Thr-45 serves as a coordination point for pyruvate. Catalysis depends on Tyr-140, which acts as the Proton donor/acceptor. The active-site Schiff-base intermediate with substrate is Lys-169. Val-210 provides a ligand contact to pyruvate.

This sequence belongs to the DapA family. In terms of assembly, homotetramer; dimer of dimers.

It localises to the cytoplasm. The catalysed reaction is L-aspartate 4-semialdehyde + pyruvate = (2S,4S)-4-hydroxy-2,3,4,5-tetrahydrodipicolinate + H2O + H(+). The protein operates within amino-acid biosynthesis; L-lysine biosynthesis via DAP pathway; (S)-tetrahydrodipicolinate from L-aspartate: step 3/4. Functionally, catalyzes the condensation of (S)-aspartate-beta-semialdehyde [(S)-ASA] and pyruvate to 4-hydroxy-tetrahydrodipicolinate (HTPA). This chain is 4-hydroxy-tetrahydrodipicolinate synthase, found in Helicobacter acinonychis (strain Sheeba).